We begin with the raw amino-acid sequence, 84 residues long: Cell division topological specificity factor (84 aa).

It belongs to the MinE family.

Functionally, prevents the cell division inhibition by proteins MinC and MinD at internal division sites while permitting inhibition at polar sites. This ensures cell division at the proper site by restricting the formation of a division septum at the midpoint of the long axis of the cell. This Pseudomonas aeruginosa (strain LESB58) protein is Cell division topological specificity factor.